Here is a 473-residue protein sequence, read N- to C-terminus: MKLSFIASPVWALALAQFAAATQVKIDVDVAIFGGGSAGIHAAIQLRDAGATVAVIEKKSQIGGHAETYTDPQGKSTNVGVVVFDNIEVASNYFARLNVSIVRGSPLGTAGPTYTYDFTSGAQIPAVNTSAEAQQQLTAALQSYSTNVLSKYPWIDEGFLVPDPVPEELTIPFGELAQKYNFTALMPTIAMYNYFTGDLSTIPSLYGIKGLGQGALKNLFGSFILPASGKTRDLYDAAAIELGNSVLLNADVVKVQRDVRINSTTTGVTVLIQQPGQPPKLIRARKLLVAAPPTLENVGAFDLTAEERGLISKFSSLGCWASVANVPGLNVTLKNYGVHMPYNQPSIPGPYGFVAYGSPNNFLVTVGLPDAANTAAKGEAVVRQSLATLSAVGAVPADALEKLTFPFSAVHSPYSLRVSAEEIKAGFYSKFLALEGARNTYWTGAVWAGHNSALIWNFNMGTVLPGLKKDLGL.

Positions Met1–Ala21 are cleaved as a signal peptide. Residues Asn98, Asn128, Asn181, Asn262, and Asn330 are each glycosylated (N-linked (GlcNAc...) asparagine).

Belongs to the beta-cyclopiazonate dehydrogenase family. FAD is required as a cofactor.

It participates in secondary metabolite biosynthesis; terpenoid biosynthesis. FAD-dependent oxidoreductase; part of the gene cluster that mediates the biosynthesis of the diterpenoid pyrones higginsianins A and B. The first step of the pathway is the synthesis of the alpha-pyrone moiety by the polyketide synthase dpchA via condensation of one acetyl-CoA starter unit with 3 malonyl-CoA units and 2 methylations. The alpha-pyrone is then combined with geranylgeranyl pyrophosphate (GGPP) formed by the GGPP synthase dpchD through the action of the prenyltransferase dpchC to yield a linear alpha-pyrone diterpenoid. Subsequent steps in the diterpenoid pyrone biosynthetic pathway involve the decalin core formation, which is initiated by the epoxidation of the C10-C11 olefin by the FAD-dependent oxidoreductase dpchE, and is followed by a cyclization cascade catalyzed by the terpene cyclase dpchB. The short chain dehydrogenase/reductase dpchG then oxidizes the 8S hydroxy group to a ketone and the short chain dehydrogenase/reductase dpchH reduces the ketone to the 8R hydroxy group to yield higginsianin B. Finally, the FAD-dependent oxidoreductase dpchF converts higginsianin B into higginsianin A. The protein is FAD-dependent oxidoreductase dpchF of Colletotrichum higginsianum (strain IMI 349063) (Crucifer anthracnose fungus).